The sequence spans 316 residues: Coiled-coil domain-containing protein 42 (316 aa).

Coiled coils occupy residues 39 to 146 (SPSI…SAKL) and 178 to 232 (LVSM…DRAR).

It belongs to the CFAP73 family. In terms of assembly, interacts with ODF1 and ODF2. Interacts with CCDC38. Interacts with CCDC146. Interacts with CFAP53.

The protein resides in the cytoplasm. The protein localises to the perinuclear region. It localises to the cytoskeleton. It is found in the cell projection. Its subcellular location is the cilium. The protein resides in the flagellum. The protein localises to the microtubule organizing center. It localises to the centrosome. Its function is as follows. Essential for male fertility. Required for sperm development. The polypeptide is Coiled-coil domain-containing protein 42 (Homo sapiens (Human)).